Reading from the N-terminus, the 506-residue chain is Histidine ammonia-lyase (506 aa).

Positions 143-145 form a cross-link, 5-imidazolinone (Ala-Gly); it reads ASG. At S144 the chain carries 2,3-didehydroalanine (Ser).

Belongs to the PAL/histidase family. Post-translationally, contains an active site 4-methylidene-imidazol-5-one (MIO), which is formed autocatalytically by cyclization and dehydration of residues Ala-Ser-Gly.

It localises to the cytoplasm. The enzyme catalyses L-histidine = trans-urocanate + NH4(+). Its pathway is amino-acid degradation; L-histidine degradation into L-glutamate; N-formimidoyl-L-glutamate from L-histidine: step 1/3. The sequence is that of Histidine ammonia-lyase from Salmonella paratyphi C (strain RKS4594).